The following is a 119-amino-acid chain: Beta-2-microglobulin (119 aa).

The first 20 residues, 1-20 (MARTVATFFLMLVSLACLDA), serve as a signal peptide directing secretion. The Ig-like C1-type domain maps to 25–114 (PQVQVYTRHP…VTLKEPKVVT (90 aa)). Cys45 and Cys100 are joined by a disulfide.

This sequence belongs to the beta-2-microglobulin family. As to quaternary structure, heterodimer of an alpha chain and a beta chain. Beta-2-microglobulin is the beta-chain of major histocompatibility complex class I molecules.

Its subcellular location is the secreted. Its function is as follows. Component of the class I major histocompatibility complex (MHC). Involved in the presentation of peptide antigens to the immune system. The protein is Beta-2-microglobulin (B2M) of Sigmodon hispidus (Hispid cotton rat).